A 367-amino-acid polypeptide reads, in one-letter code: MASRPDTDDYLNLFLNDVPLMDVRAPVEFAKGSFPSAENAPLMNDEERHRVGICYKEKGQDKAIELGHQLVSGDIKAQRIEAWKRFVAQHPEGYLFCFRGGLRSRLTQQWIRDSGIDYPLVKGGYKALRRFLIDSLEAQIESGQFRILSGRTGTGKTRVLMQLPNPVDLEGLANHRGSSFGRQVTPQPSQIDFENRLGVAMLKARHQAGGPIYLEDESRLIGRCALPETLRARMSESPLLILEQAMEERIAIIRADYVEGMLASYRARDGEDAGWLNFRDYLLSAIDRIRKRLGGERYQKLRNLMLQALDQQEANGSLEGHHGWIEALLTDYYDPMYDYQLTQKQGEILVRGGPEVITEWARSRTST.

Residues 14-137 (FLNDVPLMDV…LRRFLIDSLE (124 aa)) enclose the Rhodanese domain. The active-site S-selanylcysteine intermediate is Cys97.

The protein belongs to the SelU family. Monomer.

It carries out the reaction 5-methylaminomethyl-2-thiouridine(34) in tRNA + selenophosphate + (2E)-geranyl diphosphate + H2O + H(+) = 5-methylaminomethyl-2-selenouridine(34) in tRNA + (2E)-thiogeraniol + phosphate + diphosphate. The catalysed reaction is 5-methylaminomethyl-2-thiouridine(34) in tRNA + (2E)-geranyl diphosphate = 5-methylaminomethyl-S-(2E)-geranyl-thiouridine(34) in tRNA + diphosphate. It catalyses the reaction 5-methylaminomethyl-S-(2E)-geranyl-thiouridine(34) in tRNA + selenophosphate + H(+) = 5-methylaminomethyl-2-(Se-phospho)selenouridine(34) in tRNA + (2E)-thiogeraniol. The enzyme catalyses 5-methylaminomethyl-2-(Se-phospho)selenouridine(34) in tRNA + H2O = 5-methylaminomethyl-2-selenouridine(34) in tRNA + phosphate. Its function is as follows. Involved in the post-transcriptional modification of the uridine at the wobble position (U34) of tRNA(Lys), tRNA(Glu) and tRNA(Gln). Catalyzes the conversion of 2-thiouridine (S2U-RNA) to 2-selenouridine (Se2U-RNA). Acts in a two-step process involving geranylation of 2-thiouridine (S2U) to S-geranyl-2-thiouridine (geS2U) and subsequent selenation of the latter derivative to 2-selenouridine (Se2U) in the tRNA chain. The chain is tRNA 2-selenouridine synthase from Marinobacter nauticus (strain ATCC 700491 / DSM 11845 / VT8) (Marinobacter aquaeolei).